We begin with the raw amino-acid sequence, 186 residues long: MDADSDVALDILITNVVCVFRTRCHLNLRKIALEGLNVIYKREVSKVLMKLRKPRITATIWSSGKIICTGATSEEEAKVGARRLARSLQKLGFQVKFTEFKVVNVLAVCTMPFEIRLNEFTKQNRPHASYEPELHPAVCYRIKSLRATLQIFSTGSITVTGPDVKSVASAIEQIYPFVFESRKTIL.

It belongs to the TBP family. Expressed ubiquitously with highest expression in the ovary and testis.

The protein resides in the cytoplasm. Its subcellular location is the nucleus. Functionally, part of a specialized transcription system that mediates the transcription of most ribosomal proteins through the 5'-TCT-3' motif which is a core promoter element at these genes. Seems to also mediate the transcription of NF1. Does not bind the TATA box. Members of the TBP family are differentially required to regulate transcription and development during early embryogenesis. Particularly regulates genes that have a role in catabolism. The chain is TATA box-binding protein-like 1 (tbpl1) from Xenopus laevis (African clawed frog).